A 187-amino-acid chain; its full sequence is Elongation factor P (187 aa).

This sequence belongs to the elongation factor P family.

It is found in the cytoplasm. It participates in protein biosynthesis; polypeptide chain elongation. In terms of biological role, involved in peptide bond synthesis. Stimulates efficient translation and peptide-bond synthesis on native or reconstituted 70S ribosomes in vitro. Probably functions indirectly by altering the affinity of the ribosome for aminoacyl-tRNA, thus increasing their reactivity as acceptors for peptidyl transferase. This is Elongation factor P from Corynebacterium diphtheriae (strain ATCC 700971 / NCTC 13129 / Biotype gravis).